The sequence spans 503 residues: uncharacterized protein (503 aa).

Disordered stretches follow at residues M1–T26 and D132–M156. Positions A16–T26 are enriched in low complexity. The segment covering T147–M156 has biased composition (polar residues).

This is an uncharacterized protein from Caenorhabditis elegans.